We begin with the raw amino-acid sequence, 491 residues long: UDP-N-acetylmuramate--L-alanine ligase (491 aa).

126 to 132 is a binding site for ATP; the sequence is GTHGKTT.

It belongs to the MurCDEF family.

Its subcellular location is the cytoplasm. It carries out the reaction UDP-N-acetyl-alpha-D-muramate + L-alanine + ATP = UDP-N-acetyl-alpha-D-muramoyl-L-alanine + ADP + phosphate + H(+). Its pathway is cell wall biogenesis; peptidoglycan biosynthesis. Cell wall formation. The sequence is that of UDP-N-acetylmuramate--L-alanine ligase from Klebsiella pneumoniae subsp. pneumoniae (strain ATCC 700721 / MGH 78578).